Reading from the N-terminus, the 368-residue chain is UDP-N-acetylglucosamine--N-acetylmuramyl-(pentapeptide) pyrophosphoryl-undecaprenol N-acetylglucosamine transferase (368 aa).

Residues 10-12, Asn124, Ser196, Ile251, and Gln296 each bind UDP-N-acetyl-alpha-D-glucosamine; that span reads TGG.

It belongs to the glycosyltransferase 28 family. MurG subfamily.

It is found in the cell membrane. It catalyses the reaction Mur2Ac(oyl-L-Ala-gamma-D-Glu-L-Lys-D-Ala-D-Ala)-di-trans,octa-cis-undecaprenyl diphosphate + UDP-N-acetyl-alpha-D-glucosamine = beta-D-GlcNAc-(1-&gt;4)-Mur2Ac(oyl-L-Ala-gamma-D-Glu-L-Lys-D-Ala-D-Ala)-di-trans,octa-cis-undecaprenyl diphosphate + UDP + H(+). Its pathway is cell wall biogenesis; peptidoglycan biosynthesis. In terms of biological role, cell wall formation. Catalyzes the transfer of a GlcNAc subunit on undecaprenyl-pyrophosphoryl-MurNAc-pentapeptide (lipid intermediate I) to form undecaprenyl-pyrophosphoryl-MurNAc-(pentapeptide)GlcNAc (lipid intermediate II). This chain is UDP-N-acetylglucosamine--N-acetylmuramyl-(pentapeptide) pyrophosphoryl-undecaprenol N-acetylglucosamine transferase, found in Limosilactobacillus fermentum (strain NBRC 3956 / LMG 18251) (Lactobacillus fermentum).